We begin with the raw amino-acid sequence, 370 residues long: MMMSDLPHDLVEEILSRLPLISLKAMRSTCKTWNVLSKHRSFANKHIGNVTASGKRDLIMIKDCKVYSIGVNLHGIQNNNNIIDLSIKNKGILHLENLDLIFKEIFNVFHCNGLLLLYGSITDDSIRLVVCNPYWGKREWVKRINNFASFDKLAFGYDKSCGCHKILRVFDSYPNRLEIYNLRSNSRMVSSFPLKWDIAFMQDGVSLKGNTYWYAKDRRSEDCYLICFDFTRERFGPRLPLPQPFIDEFLGSLYVVREEKLAVLVKRWRGGKSEIDIWVTNKIEPDEVSWSKFLKVDNTPRFFLTEGYLIYDEEKVVVFFNKEETEGLKSTVHIAYIVGENGYFRRADLREPLYQPLCRLVCSYVPSSVK.

The region spanning 1 to 45 (MMMSDLPHDLVEEILSRLPLISLKAMRSTCKTWNVLSKHRSFANK) is the F-box domain.

The chain is F-box protein At3g20690 from Arabidopsis thaliana (Mouse-ear cress).